Here is a 304-residue protein sequence, read N- to C-terminus: Sulfate adenylyltransferase subunit 2 (304 aa).

The protein belongs to the PAPS reductase family. CysD subfamily. In terms of assembly, heterodimer composed of CysD, the smaller subunit, and CysNC.

The enzyme catalyses sulfate + ATP + H(+) = adenosine 5'-phosphosulfate + diphosphate. Its pathway is sulfur metabolism; hydrogen sulfide biosynthesis; sulfite from sulfate: step 1/3. Functionally, with CysN forms the ATP sulfurylase (ATPS) that catalyzes the adenylation of sulfate producing adenosine 5'-phosphosulfate (APS) and diphosphate, the first enzymatic step in sulfur assimilation pathway. APS synthesis involves the formation of a high-energy phosphoric-sulfuric acid anhydride bond driven by GTP hydrolysis by CysN coupled to ATP hydrolysis by CysD. This Xylella fastidiosa (strain Temecula1 / ATCC 700964) protein is Sulfate adenylyltransferase subunit 2.